The primary structure comprises 103 residues: UPF0235 protein Dole_0289 (103 aa).

The protein belongs to the UPF0235 family.

The chain is UPF0235 protein Dole_0289 from Desulfosudis oleivorans (strain DSM 6200 / JCM 39069 / Hxd3) (Desulfococcus oleovorans).